We begin with the raw amino-acid sequence, 538 residues long: Putative cysteine ligase BshC (538 aa).

A coiled-coil region spans residues 460-484; it reads KINEQIELLERMLKRNVEKKHEVEL.

It belongs to the BshC family.

Functionally, involved in bacillithiol (BSH) biosynthesis. May catalyze the last step of the pathway, the addition of cysteine to glucosamine malate (GlcN-Mal) to generate BSH. This Bacillus cereus (strain ATCC 10987 / NRS 248) protein is Putative cysteine ligase BshC.